The following is a 390-amino-acid chain: GTPase Obg (390 aa).

The 159-residue stretch at 1-159 (MKFIDESLIR…RDLLLELMLL (159 aa)) folds into the Obg domain. The OBG-type G domain maps to 160-333 (ADVGMLGLPN…LCRDIMDFII (174 aa)). GTP is bound by residues 166–173 (GLPNAGKS), 191–195 (FTTLV), 213–216 (DIPG), 283–286 (NKID), and 314–316 (SAA). Mg(2+) contacts are provided by serine 173 and threonine 193.

Belongs to the TRAFAC class OBG-HflX-like GTPase superfamily. OBG GTPase family. Monomer. Mg(2+) is required as a cofactor.

It localises to the cytoplasm. An essential GTPase which binds GTP, GDP and possibly (p)ppGpp with moderate affinity, with high nucleotide exchange rates and a fairly low GTP hydrolysis rate. Plays a role in control of the cell cycle, stress response, ribosome biogenesis and in those bacteria that undergo differentiation, in morphogenesis control. This chain is GTPase Obg, found in Haemophilus influenzae (strain 86-028NP).